We begin with the raw amino-acid sequence, 411 residues long: Serine--tRNA ligase (411 aa).

L-serine is bound at residue 226–228 (TSE). 257–259 (RKE) contacts ATP. L-serine is bound at residue glutamate 280. 344-347 (EISS) is a binding site for ATP. Position 379 (serine 379) interacts with L-serine.

Belongs to the class-II aminoacyl-tRNA synthetase family. Type-1 seryl-tRNA synthetase subfamily. In terms of assembly, homodimer. The tRNA molecule binds across the dimer.

The protein localises to the cytoplasm. The enzyme catalyses tRNA(Ser) + L-serine + ATP = L-seryl-tRNA(Ser) + AMP + diphosphate + H(+). It catalyses the reaction tRNA(Sec) + L-serine + ATP = L-seryl-tRNA(Sec) + AMP + diphosphate + H(+). Its pathway is aminoacyl-tRNA biosynthesis; selenocysteinyl-tRNA(Sec) biosynthesis; L-seryl-tRNA(Sec) from L-serine and tRNA(Sec): step 1/1. In terms of biological role, catalyzes the attachment of serine to tRNA(Ser). Is also able to aminoacylate tRNA(Sec) with serine, to form the misacylated tRNA L-seryl-tRNA(Sec), which will be further converted into selenocysteinyl-tRNA(Sec). The chain is Serine--tRNA ligase from Campylobacter jejuni subsp. jejuni serotype O:6 (strain 81116 / NCTC 11828).